The primary structure comprises 388 residues: MKLPALLILGVAASTMVLAAIAPDQVPLNDAKKDELPEKFLIELAPGDTRWVTEDEKWELKREGLKFFDITAEVEQGFLPKVFPTPAVVNFPSELNRTAEVKQLASQLSKENMFNHLTNFTSFHTRYYKSTAGTQSATWLFEQVQQTVNNSLAVKYGAKVETFNHSWSQFSIIASIPGRTNKTVVVGAHQDSINMYLPTIQAPGADDDGSGTVTILEALRVLLQSDAVAQGNATNTIEFHWYSAEEAGLLGSQAVFSKYKNENRDIKSMLQQDMTGYSQGTLDAGEQESVGVITDYVHSGLTEFIMKVITGYCDIPFVLTKCGYACSDHASASRYGYPSAFVIESKFEHSSQRIHTMWDTVEYLDFDHMLQHAKMTLGLVYELAFAEL.

Residues 1 to 19 (MKLPALLILGVAASTMVLA) form the signal peptide. Residues 20 to 88 (AIAPDQVPLN…LPKVFPTPAV (69 aa)) constitute a propeptide that is removed on maturation. Asn-96, Asn-119, Asn-149, Asn-164, and Asn-181 each carry an N-linked (GlcNAc...) asparagine glycan. Zn(2+) contacts are provided by His-189 and Asp-207. An N-linked (GlcNAc...) asparagine glycan is attached at Asn-232. Zn(2+) contacts are provided by Glu-246 and Asp-273. Cysteines 322 and 326 form a disulfide. His-355 lines the Zn(2+) pocket.

The protein belongs to the peptidase M28 family. M28E subfamily. Monomer. It depends on Zn(2+) as a cofactor.

It is found in the secreted. Functionally, extracellular aminopeptidase that allows assimilation of proteinaceous substrates. The polypeptide is Leucine aminopeptidase 1 (LAP1) (Paracoccidioides brasiliensis (strain Pb03)).